The primary structure comprises 118 residues: Large ribosomal subunit protein bL19 (118 aa).

It belongs to the bacterial ribosomal protein bL19 family.

Functionally, this protein is located at the 30S-50S ribosomal subunit interface and may play a role in the structure and function of the aminoacyl-tRNA binding site. This Helicobacter pylori (strain J99 / ATCC 700824) (Campylobacter pylori J99) protein is Large ribosomal subunit protein bL19 (rplS).